A 128-amino-acid polypeptide reads, in one-letter code: Sulfurtransferase TusD (128 aa).

Cysteine 78 serves as the catalytic Cysteine persulfide intermediate.

Belongs to the DsrE/TusD family. Heterohexamer, formed by a dimer of trimers. The hexameric TusBCD complex contains 2 copies each of TusB, TusC and TusD. The TusBCD complex interacts with TusE.

The protein resides in the cytoplasm. In terms of biological role, part of a sulfur-relay system required for 2-thiolation of 5-methylaminomethyl-2-thiouridine (mnm(5)s(2)U) at tRNA wobble positions. Accepts sulfur from TusA and transfers it in turn to TusE. The chain is Sulfurtransferase TusD from Escherichia fergusonii (strain ATCC 35469 / DSM 13698 / CCUG 18766 / IAM 14443 / JCM 21226 / LMG 7866 / NBRC 102419 / NCTC 12128 / CDC 0568-73).